The primary structure comprises 166 residues: NAD(P)H-quinone oxidoreductase subunit I, chloroplastic (166 aa).

2 consecutive 4Fe-4S ferredoxin-type domains span residues 55-84 and 95-124; these read GRIH…VDWK and LNYS…MTEE. Residues C64, C67, C70, C74, C104, C107, C110, and C114 each contribute to the [4Fe-4S] cluster site.

It belongs to the complex I 23 kDa subunit family. NDH is composed of at least 16 different subunits, 5 of which are encoded in the nucleus. [4Fe-4S] cluster serves as cofactor.

The protein resides in the plastid. The protein localises to the chloroplast thylakoid membrane. It catalyses the reaction a plastoquinone + NADH + (n+1) H(+)(in) = a plastoquinol + NAD(+) + n H(+)(out). It carries out the reaction a plastoquinone + NADPH + (n+1) H(+)(in) = a plastoquinol + NADP(+) + n H(+)(out). NDH shuttles electrons from NAD(P)H:plastoquinone, via FMN and iron-sulfur (Fe-S) centers, to quinones in the photosynthetic chain and possibly in a chloroplast respiratory chain. The immediate electron acceptor for the enzyme in this species is believed to be plastoquinone. Couples the redox reaction to proton translocation, and thus conserves the redox energy in a proton gradient. The sequence is that of NAD(P)H-quinone oxidoreductase subunit I, chloroplastic from Steiractinia sodiroi.